The following is a 347-amino-acid chain: NADH-quinone oxidoreductase subunit H (347 aa).

8 helical membrane-spanning segments follow: residues 13–33 (LIMIGQSLLLLVCLLVFIAYI), 82–102 (AVFLLAPLVSVVLALSTWAVV), 115–135 (VGILYILAISSLEVYGIIMGG), 161–181 (IGLVIVTVLLCVGSLNLTDIV), 198–218 (FLDWHWLSLFPMFIVFFISAL), 258–278 (AVVLMCSLTTILFLGGWLPPV), 286–306 (VPGIIWFMLKACFVFFMFAMV), and 321–341 (LGWKVFLPLSLAMVVIVAFVL).

Belongs to the complex I subunit 1 family. In terms of assembly, NDH-1 is composed of 14 different subunits. Subunits NuoA, H, J, K, L, M, N constitute the membrane sector of the complex.

Its subcellular location is the cell inner membrane. It catalyses the reaction a quinone + NADH + 5 H(+)(in) = a quinol + NAD(+) + 4 H(+)(out). Functionally, NDH-1 shuttles electrons from NADH, via FMN and iron-sulfur (Fe-S) centers, to quinones in the respiratory chain. The immediate electron acceptor for the enzyme in this species is believed to be ubiquinone. Couples the redox reaction to proton translocation (for every two electrons transferred, four hydrogen ions are translocated across the cytoplasmic membrane), and thus conserves the redox energy in a proton gradient. This subunit may bind ubiquinone. The protein is NADH-quinone oxidoreductase subunit H of Rhizobium rhizogenes (strain K84 / ATCC BAA-868) (Agrobacterium radiobacter).